An 89-amino-acid chain; its full sequence is Probable Fe(2+)-trafficking protein (89 aa).

The protein belongs to the Fe(2+)-trafficking protein family.

Could be a mediator in iron transactions between iron acquisition and iron-requiring processes, such as synthesis and/or repair of Fe-S clusters in biosynthetic enzymes. The sequence is that of Probable Fe(2+)-trafficking protein from Legionella pneumophila (strain Lens).